Consider the following 846-residue polypeptide: Spindle pole body component SPC98 (846 aa).

2 positions are modified to phosphoserine: S124 and S136.

This sequence belongs to the TUBGCP family. In terms of assembly, interacts with TUB4, SPC72 and SPC97.

It is found in the nucleus. The protein resides in the cytoplasm. The protein localises to the cytoskeleton. It localises to the microtubule organizing center. Its subcellular location is the spindle pole body. Its function is as follows. Involved in microtubule organization by the microtubule organizing center, the spindle pole body (SPB). Probably part of the microtubule attachment site at the SPB. This chain is Spindle pole body component SPC98 (SPC98), found in Saccharomyces cerevisiae (strain ATCC 204508 / S288c) (Baker's yeast).